The sequence spans 527 residues: Secologanin synthase 2 (527 aa).

The Lumenal portion of the chain corresponds to 1–11 (MEMDMDIIRKA). The chain crosses the membrane as a helical span at residues 12–32 (IAATIFALVMAWAWRVLDWAW). The Cytoplasmic portion of the chain corresponds to 33 to 527 (FTPKRIEKRL…IYKKLERQNF (495 aa)). Position 470 (Cys470) interacts with heme.

The protein belongs to the cytochrome P450 family. The cofactor is heme. As to expression, expressed in leaves (especially in leaf epidermis), and, to a lower extent, in roots, stems, flower buds and flowers.

Its subcellular location is the endoplasmic reticulum membrane. It catalyses the reaction loganin + reduced [NADPH--hemoprotein reductase] + O2 = secologanin + oxidized [NADPH--hemoprotein reductase] + 2 H2O + H(+). It carries out the reaction secologanin + reduced [NADPH--hemoprotein reductase] + O2 = secoxyloganin + oxidized [NADPH--hemoprotein reductase] + H2O + 2 H(+). It functions in the pathway alkaloid biosynthesis. In terms of biological role, component of the seco-iridoid and derivatives monoterpenoid indole alkaloids (MIAs, e.g. secologanin) biosynthesis pathway. Catalyzes the conversion of loganin into secologanin. Catalyzes the conversion of secologanin into secoxyloganin. The protein is Secologanin synthase 2 of Catharanthus roseus (Madagascar periwinkle).